Consider the following 271-residue polypeptide: Dermonecrotic toxin SpeSicTox-betaIF1 (271 aa).

Residue histidine 3 is part of the active site. Positions 23 and 25 each coordinate Mg(2+). Histidine 39 functions as the Nucleophile in the catalytic mechanism. 2 disulfides stabilise this stretch: cysteine 43–cysteine 49 and cysteine 45–cysteine 188. Aspartate 83 lines the Mg(2+) pocket.

The protein belongs to the arthropod phospholipase D family. Class II subfamily. Mg(2+) is required as a cofactor. As to expression, expressed by the venom gland.

It is found in the secreted. The catalysed reaction is an N-(acyl)-sphingosylphosphocholine = an N-(acyl)-sphingosyl-1,3-cyclic phosphate + choline. The enzyme catalyses an N-(acyl)-sphingosylphosphoethanolamine = an N-(acyl)-sphingosyl-1,3-cyclic phosphate + ethanolamine. It catalyses the reaction a 1-acyl-sn-glycero-3-phosphocholine = a 1-acyl-sn-glycero-2,3-cyclic phosphate + choline. It carries out the reaction a 1-acyl-sn-glycero-3-phosphoethanolamine = a 1-acyl-sn-glycero-2,3-cyclic phosphate + ethanolamine. In terms of biological role, dermonecrotic toxins cleave the phosphodiester linkage between the phosphate and headgroup of certain phospholipids (sphingolipid and lysolipid substrates), forming an alcohol (often choline) and a cyclic phosphate. This toxin acts on sphingomyelin (SM). It may also act on ceramide phosphoethanolamine (CPE), lysophosphatidylcholine (LPC) and lysophosphatidylethanolamine (LPE), but not on lysophosphatidylserine (LPS), and lysophosphatidylglycerol (LPG). It acts by transphosphatidylation, releasing exclusively cyclic phosphate products as second products. Induces dermonecrosis, hemolysis, increased vascular permeability, edema, inflammatory response, and platelet aggregation. The sequence is that of Dermonecrotic toxin SpeSicTox-betaIF1 from Sicarius peruensis (Six-eyed sand spider).